The chain runs to 706 residues: Methionine--tRNA ligase (706 aa).

The short motif at 13–23 is the 'HIGH' region element; it reads PYANGSIHLGH. Zn(2+) contacts are provided by Cys-144, Cys-147, Cys-157, and Cys-160. The short motif at 336–340 is the 'KMSKS' region element; the sequence is KMSKS. Lys-339 contributes to the ATP binding site. The disordered stretch occupies residues 570–593; it reads QQTMNTETESHSPQRHGQAQQHPV. One can recognise a tRNA-binding domain in the interval 604 to 706; sequence DFVKIDLRIA…SGAQPGMRVK (103 aa).

The protein belongs to the class-I aminoacyl-tRNA synthetase family. MetG type 1 subfamily. As to quaternary structure, homodimer. It depends on Zn(2+) as a cofactor.

It localises to the cytoplasm. It carries out the reaction tRNA(Met) + L-methionine + ATP = L-methionyl-tRNA(Met) + AMP + diphosphate. Its function is as follows. Is required not only for elongation of protein synthesis but also for the initiation of all mRNA translation through initiator tRNA(fMet) aminoacylation. This Nitrosomonas europaea (strain ATCC 19718 / CIP 103999 / KCTC 2705 / NBRC 14298) protein is Methionine--tRNA ligase.